The primary structure comprises 159 residues: Ribosomal RNA large subunit methyltransferase H (159 aa).

S-adenosyl-L-methionine contacts are provided by residues L76, G107, and 126–131 (LSSLTL).

This sequence belongs to the RNA methyltransferase RlmH family. As to quaternary structure, homodimer.

The protein resides in the cytoplasm. The enzyme catalyses pseudouridine(1915) in 23S rRNA + S-adenosyl-L-methionine = N(3)-methylpseudouridine(1915) in 23S rRNA + S-adenosyl-L-homocysteine + H(+). Functionally, specifically methylates the pseudouridine at position 1915 (m3Psi1915) in 23S rRNA. This is Ribosomal RNA large subunit methyltransferase H from Cupriavidus pinatubonensis (strain JMP 134 / LMG 1197) (Cupriavidus necator (strain JMP 134)).